The primary structure comprises 416 residues: MKKYESRRSKIADGVYWVGVLDWDIRMYHGYTLKGTTYNAYLVFGDEKVALIDNTYPGTSAQMWGRIKDAFEKEGREFKIDVIVQNHVEKDHSGALPEIHKKFPDAPIYCTEVAVEGLKKHYPSLKDAQFKVVHTGDTVDLGGKTLTFLEAPLLHWPDSMFTFYNEGGILFSNDAFGQHLCFPAHKRFDKDIPEYVLMDANQKFYANLITPLSKLVLKKFEEVIQLGLLEKIKMIAPSHGQIWTDPMKVIKAYQDFATGKAAKDKAVIVYDTMHYSTQKMAHAFAEGLMSEGIDVVMYFLHYDERSEIVKDILDAKAVLFGIPTIYDEPYPSIGDIIYYLRGLKFNRTGFKRLAVTFGSMGGEGGAVAKIAEDLAKCGFEVINQYELYYVPTEDELTNCYNMGKELAKRIKEMKIE.

7 residues coordinate Fe cation: His87, Glu89, Asp91, His92, His155, Asp174, and His239. The Flavodoxin-like domain occupies 266-407 (AVIVYDTMHY…NCYNMGKELA (142 aa)). FMN-binding positions include 272-277 (TMHYST), 324-327 (TIYD), and 359-364 (SMGGEG).

It in the N-terminal section; belongs to the zinc metallo-hydrolase group 3 family. Requires FMN as cofactor. Fe cation is required as a cofactor.

It catalyses the reaction 2 reduced coenzyme F420-(gamma-L-Glu)(n) + O2 = 2 oxidized coenzyme F420-(gamma-L-Glu)(n) + 2 H2O + 2 H(+). In terms of biological role, catalyzes the oxidation of F420H(2) with O(2). May be involved in O(2) detoxification, reducing the intracellular O(2) concentration to a level allowing growth at the expense of methane formation. In Methanocaldococcus jannaschii (strain ATCC 43067 / DSM 2661 / JAL-1 / JCM 10045 / NBRC 100440) (Methanococcus jannaschii), this protein is Coenzyme F420H(2) oxidase (fprA).